The primary structure comprises 863 residues: NACHT, LRR and PYD domains-containing protein 4B (863 aa).

The 93-residue stretch at 1–93 folds into the Pyrin domain; the sequence is MASLFSDFGF…TNRATGEIAA (93 aa). The NACHT domain maps to 143–466; sequence KMVVLQGVAG…FYLLHSEMDH (324 aa). 149–156 serves as a coordination point for ATP; it reads GVAGIGKT. LRR repeat units lie at residues 618–643, 683–706, 717–740, 741–763, 765–782, 797–824, and 843–863; these read WHQICSVFLRNKDIKTLRIEDTIFNE, SYNLEELYLRGTFLSHSDVEMLCD, ILDLANCSLCEHSWDYLSDVLRQN, KSLRYLNISYNNLKDEGLKALCR, LTLPNSALHSLSLEACQL, YKCLRRINLAKNSLGFSGLFVLCKAMKD, and SQEFLLSEMERNKILSIENGV.

The protein belongs to the NLRP family.

Its function is as follows. May be involved in inflammation and recognition of cytosolic pathogen-associated molecular patterns (PAMPs) not intercepted by membrane-bound receptors. The polypeptide is NACHT, LRR and PYD domains-containing protein 4B (Nlrp4b) (Mus musculus (Mouse)).